A 556-amino-acid chain; its full sequence is 2-succinyl-5-enolpyruvyl-6-hydroxy-3-cyclohexene-1-carboxylate synthase (556 aa).

This sequence belongs to the TPP enzyme family. MenD subfamily. As to quaternary structure, homodimer. The cofactor is Mg(2+). Mn(2+) serves as cofactor. Requires thiamine diphosphate as cofactor.

It catalyses the reaction isochorismate + 2-oxoglutarate + H(+) = 5-enolpyruvoyl-6-hydroxy-2-succinyl-cyclohex-3-ene-1-carboxylate + CO2. It functions in the pathway quinol/quinone metabolism; 1,4-dihydroxy-2-naphthoate biosynthesis; 1,4-dihydroxy-2-naphthoate from chorismate: step 2/7. It participates in quinol/quinone metabolism; menaquinone biosynthesis. Its function is as follows. Catalyzes the thiamine diphosphate-dependent decarboxylation of 2-oxoglutarate and the subsequent addition of the resulting succinic semialdehyde-thiamine pyrophosphate anion to isochorismate to yield 2-succinyl-5-enolpyruvyl-6-hydroxy-3-cyclohexene-1-carboxylate (SEPHCHC). In Citrobacter koseri (strain ATCC BAA-895 / CDC 4225-83 / SGSC4696), this protein is 2-succinyl-5-enolpyruvyl-6-hydroxy-3-cyclohexene-1-carboxylate synthase.